A 304-amino-acid polypeptide reads, in one-letter code: Cell division protein ZipA (304 aa).

Residues 1–5 are Periplasmic-facing; the sequence is MQDLR. A helical transmembrane segment spans residues 6-26; that stretch reads LILIVVGAIAIIALLLHGLWT. Residues 27 to 304 lie on the Cytoplasmic side of the membrane; the sequence is SRKERSSVFR…IRDVIDANSH (278 aa). The disordered stretch occupies residues 31 to 165; it reads RSSVFRDRPH…PEPQSQPKQK (135 aa). Positions 121-132 are enriched in basic and acidic residues; sequence ARPETHKPDQPE. The span at 137–158 shows a compositional bias: low complexity; it reads AAPAAAETAPAPAEPAQKTPEP.

This sequence belongs to the ZipA family. Interacts with FtsZ via their C-terminal domains.

It localises to the cell inner membrane. Essential cell division protein that stabilizes the FtsZ protofilaments by cross-linking them and that serves as a cytoplasmic membrane anchor for the Z ring. Also required for the recruitment to the septal ring of downstream cell division proteins. In Erwinia tasmaniensis (strain DSM 17950 / CFBP 7177 / CIP 109463 / NCPPB 4357 / Et1/99), this protein is Cell division protein ZipA.